We begin with the raw amino-acid sequence, 174 residues long: Large ribosomal subunit protein uL10 (174 aa).

It belongs to the universal ribosomal protein uL10 family. In terms of assembly, part of the ribosomal stalk of the 50S ribosomal subunit. The N-terminus interacts with L11 and the large rRNA to form the base of the stalk. The C-terminus forms an elongated spine to which L12 dimers bind in a sequential fashion forming a multimeric L10(L12)X complex.

Forms part of the ribosomal stalk, playing a central role in the interaction of the ribosome with GTP-bound translation factors. In Coxiella burnetii (strain CbuK_Q154) (Coxiella burnetii (strain Q154)), this protein is Large ribosomal subunit protein uL10.